The sequence spans 161 residues: Eukaryotic translation initiation factor 5A-2 (161 aa).

At Lys-54 the chain carries Hypusine.

Belongs to the eIF-5A family. Post-translationally, lys-54 undergoes hypusination, a unique post-translational modification that consists in the addition of a butylamino group from spermidine to lysine side chain and leads to the formation of a hypusine residue. eIF-5As are the only known proteins to undergo this modification, which is essential for their function. As to expression, expressed in the somatic tissues.

Its subcellular location is the cytoplasm. Functionally, translation factor that promotes translation elongation and termination, particularly upon ribosome stalling at specific amino acid sequence contexts. Binds between the exit (E) and peptidyl (P) site of the ribosome and promotes rescue of stalled ribosome: specifically required for efficient translation of polyproline-containing peptides as well as other motifs that stall the ribosome. Acts as a ribosome quality control (RQC) cofactor by joining the RQC complex to facilitate peptidyl transfer during CAT tailing step. Acts in somatic tissues and its function in the soma is essential for normal growth and reproduction. This is Eukaryotic translation initiation factor 5A-2 (iff-2) from Caenorhabditis elegans.